We begin with the raw amino-acid sequence, 628 residues long: ATP-dependent zinc metalloprotease FtsH (628 aa).

Residues 1 to 7 (MKLSWKT) are Stromal-facing. A helical membrane pass occupies residues 8-28 (LLLWSLPIFVIGFFFWQGFLG). Over 29 to 118 (PTTTDVGSNI…AHPPKSTSAV (90 aa)) the chain is Lumenal. Residues 119 to 139 (WGLLGNLLFPLLLVGGLAFLF) form a helical membrane-spanning segment. At 140–628 (RRSNNASGGP…PEKNYYISQF (489 aa)) the chain is on the stromal side. Residue 213–220 (GPPGTGKT) coordinates ATP. Position 434 (histidine 434) interacts with Zn(2+). Glutamate 435 is a catalytic residue. Zn(2+) contacts are provided by histidine 438 and aspartate 512.

It in the central section; belongs to the AAA ATPase family. In the C-terminal section; belongs to the peptidase M41 family. As to quaternary structure, homohexamer. It depends on Zn(2+) as a cofactor.

The protein localises to the plastid. It localises to the chloroplast thylakoid membrane. Acts as a processive, ATP-dependent zinc metallopeptidase. This chain is ATP-dependent zinc metalloprotease FtsH, found in Pyropia yezoensis (Susabi-nori).